The chain runs to 2281 residues: Protein Ycf2 (2281 aa).

Residue 1634 to 1641 (GSIGTGRS) coordinates ATP.

This sequence belongs to the Ycf2 family.

It is found in the plastid. The protein localises to the chloroplast stroma. Its function is as follows. Probable ATPase of unknown function. Its presence in a non-photosynthetic plant (Epifagus virginiana) and experiments in tobacco indicate that it has an essential function which is probably not related to photosynthesis. In Buxus microphylla (Littleleaf boxwood), this protein is Protein Ycf2.